The sequence spans 220 residues: 7-cyano-7-deazaguanine synthase (220 aa).

ATP is bound at residue 10–20 (FSGGQDSTTCL). 4 residues coordinate Zn(2+): cysteine 188, cysteine 197, cysteine 200, and cysteine 203.

The protein belongs to the QueC family. Zn(2+) is required as a cofactor.

It catalyses the reaction 7-carboxy-7-deazaguanine + NH4(+) + ATP = 7-cyano-7-deazaguanine + ADP + phosphate + H2O + H(+). Its pathway is purine metabolism; 7-cyano-7-deazaguanine biosynthesis. In terms of biological role, catalyzes the ATP-dependent conversion of 7-carboxy-7-deazaguanine (CDG) to 7-cyano-7-deazaguanine (preQ(0)). In Neisseria meningitidis serogroup C (strain 053442), this protein is 7-cyano-7-deazaguanine synthase.